The following is a 927-amino-acid chain: Protein unc-45 homolog B (927 aa).

3 TPR repeats span residues 4 to 37 (PVQLKEEGNKYFQSNEYGQAIQCYSKALKLITDK), 41 to 74 (AVLYRNRSACYLKQDNYVQAAADASKAIDVDASD), and 76 to 108 (KALFRRCQALEKLGKLDQAYKDVQRCATLEPKN). 3 ARM repeats span residues 167 to 206 (DAGAEQIFQNNGVNLLMQLIESKDPEMILSAIRTLSGMCT), 209 to 248 (RARATAIVHLVGINKICSIMAVDNEEIALAACNLLQNIVD), and 746 to 785 (DKLRQKIIKEKALPEIENYMFENHEQIRQAATECMCNLAL).

In terms of tissue distribution, detected initially throughout the somites and the heart and gradually also expressed in the jaw, branchial arches and body wall muscles at later embryonic stages.

Its subcellular location is the cytoplasm. It is found in the myofibril. The protein resides in the sarcomere. It localises to the z line. The protein localises to the a band. Its subcellular location is the perinuclear region. It is found in the cytosol. In terms of biological role, acts as a co-chaperone for HSP90 and is required for proper folding of the myosin motor domain. Plays a role in sarcomere formation during muscle cell development. Is necessary for normal early lens development. The polypeptide is Protein unc-45 homolog B (Xenopus tropicalis (Western clawed frog)).